Here is a 534-residue protein sequence, read N- to C-terminus: CTP synthase (534 aa).

The tract at residues 1-265 (MKYIVVTGGV…TTQLMKHLRL (265 aa)) is amidoligase domain. Position 12 (Ser-12) interacts with CTP. Ser-12 contacts UTP. 13 to 18 (GLGKGI) is a binding site for ATP. Tyr-53 contacts L-glutamine. Asp-70 is a binding site for ATP. Positions 70 and 140 each coordinate Mg(2+). Residues 147 to 149 (DIE), 186 to 191 (KTKPTQ), and Lys-222 each bind CTP. UTP-binding positions include 186-191 (KTKPTQ) and Lys-222. The region spanning 289 to 530 (KLAIVGKYTN…VRAMCKYRKE (242 aa)) is the Glutamine amidotransferase type-1 domain. An L-glutamine-binding site is contributed by Gly-352. Residue Cys-379 is the Nucleophile; for glutamine hydrolysis of the active site. L-glutamine-binding positions include 380 to 383 (LGMQ), Glu-403, and Arg-460. Active-site residues include His-503 and Glu-505.

Belongs to the CTP synthase family. As to quaternary structure, homotetramer.

It carries out the reaction UTP + L-glutamine + ATP + H2O = CTP + L-glutamate + ADP + phosphate + 2 H(+). The catalysed reaction is L-glutamine + H2O = L-glutamate + NH4(+). It catalyses the reaction UTP + NH4(+) + ATP = CTP + ADP + phosphate + 2 H(+). The protein operates within pyrimidine metabolism; CTP biosynthesis via de novo pathway; CTP from UDP: step 2/2. With respect to regulation, allosterically activated by GTP, when glutamine is the substrate; GTP has no effect on the reaction when ammonia is the substrate. The allosteric effector GTP functions by stabilizing the protein conformation that binds the tetrahedral intermediate(s) formed during glutamine hydrolysis. Inhibited by the product CTP, via allosteric rather than competitive inhibition. In terms of biological role, catalyzes the ATP-dependent amination of UTP to CTP with either L-glutamine or ammonia as the source of nitrogen. Regulates intracellular CTP levels through interactions with the four ribonucleotide triphosphates. This Methanosarcina mazei (strain ATCC BAA-159 / DSM 3647 / Goe1 / Go1 / JCM 11833 / OCM 88) (Methanosarcina frisia) protein is CTP synthase.